The sequence spans 87 residues: Selenoprotein W (87 aa).

Positions 10–13 (CGAU) form a cross-link, cysteinyl-selenocysteine (Cys-Sec); redox-active. A non-standard amino acid (selenocysteine) is located at residue Sec13. Cys37 carries the post-translational modification S-glutathionyl cysteine.

It belongs to the SelWTH family. Selenoprotein W subfamily. In terms of assembly, interacts with DPYSL2, PRDX1, YWHAB, YWHAG, HSP70 and HSP90. In terms of tissue distribution, highest levels detected in skeletal muscle, tongue, heart and brain. Expressed at significantly higher levels in female skeletal muscle than in male and at slightly higher levels in female cardiac muscle than in male (at protein level). Also detected at low levels in liver.

The protein resides in the cytoplasm. In terms of biological role, plays a role as a glutathione (GSH)-dependent antioxidant. May be involved in a redox-related process. May play a role in the myopathies of selenium deficiency. This chain is Selenoprotein W, found in Macaca mulatta (Rhesus macaque).